The following is a 282-amino-acid chain: Stage 0 sporulation protein J (282 aa).

Residues 139-158 constitute a DNA-binding region (H-T-H motif); it reads EQLAKRLGKSRPHIANHLRL.

This sequence belongs to the ParB family.

It localises to the cytoplasm. Its subcellular location is the nucleoid. Functionally, required for the initiation of sporulation and for normal chromosome segregation. Antagonizes sporulation inhibition by Soj. It probably interacts with a specific DNA site and other proteins involved in partitioning and cell division, and antagonizes Soj in response to cell cycle events related to chromosome partitioning. In Bacillus subtilis (strain 168), this protein is Stage 0 sporulation protein J.